The sequence spans 878 residues: Serine/threonine-protein kinase D2 (878 aa).

The segment covering 1 to 12 (MATAPSYPAGLP) has biased composition (low complexity). Residues 1–35 (MATAPSYPAGLPGSPGPGSPPPPGGLELQSPPPLL) form a disordered region. Residues 14-35 (SPGPGSPPPPGGLELQSPPPLL) show a composition bias toward pro residues. Phosphoserine is present on Ser-30. Tyr-87 is modified (phosphotyrosine). A Phorbol-ester/DAG-type 1 zinc finger spans residues 138–188 (PHALTVHSYRAPAFCDHCGEMLFGLVRQGLKCDGCGLNYHKRCAFSIPNNC). Ser-197, Ser-198, Ser-200, Ser-203, Ser-206, Ser-212, and Ser-214 each carry phosphoserine. Residues 224 to 247 (RSTTELLPRRPPSSSSSSSASSYT) form a disordered region. Over residues 236 to 245 (SSSSSSSASS) the composition is skewed to low complexity. The residue at position 244 (Ser-244) is a Phosphoserine; by CSNK1D and CSNK1E. The Phorbol-ester/DAG-type 2 zinc-finger motif lies at 264 to 314 (PHTFLIHSYTRPTVCQACKKLLKGLFRQGLQCKDCKFNCHKRCATRVPNDC). The segment at 343 to 373 (ESEDSGVIPGSHSENALHASEEEEGEGGKAQ) is disordered. A PH domain is found at 397-509 (TTLREGWVVH…WETAIRQALM (113 aa)). Tyr-407 carries the post-translational modification Phosphotyrosine. Tyr-438 bears the Phosphotyrosine; by ABL1 mark. Ser-518 carries the post-translational modification Phosphoserine. Positions 551-807 (IFPDEVLGSG…VDKSLSHPWL (257 aa)) constitute a Protein kinase domain. Residues 557–565 (LGSGQFGVV) and Lys-580 each bind ATP. Asp-674 serves as the catalytic Proton acceptor. Residue Ser-706 is modified to Phosphoserine; by PKC. Ser-710 is modified (phosphoserine). Tyr-717 carries the phosphotyrosine; by ABL1 modification. Residues 724–726 (LNQ) carry the Important for ABL1-mediated Tyr-717 phosphorylation motif. Residues 844–869 (HPLPGSGLPTDRDLGGACPPQDHDMQ) are disordered. Ser-876 carries the phosphoserine; by autocatalysis modification.

It belongs to the protein kinase superfamily. CAMK Ser/Thr protein kinase family. PKD subfamily. As to quaternary structure, interacts (via C-terminus) with LCK. Interacts (via N-terminal AP-rich region) with CIB1 isoform 2. Interacts (via N-terminus and zing-finger domain 1 and 2) with PRKCD in response to oxidative stress; the interaction is independent of PRKD2 tyrosine phosphorylation. The cofactor is Mg(2+). In terms of processing, phosphorylation of Ser-876 correlates with the activation status of the kinase. Ser-706 or/and Ser-710 are probably phosphorylated by PKC. Phosphorylation at Ser-244 by CSNK1D and CSNK1E promotes nuclear localization and substrate targeting. Phosphorylation at Ser-244, Ser-706 and Ser-710 is required for nuclear localization. Phosphorylated at Tyr-438 by ABL1 in response to oxidative stress. Phosphorylated at Tyr-717 by ABL1 specifically in response to oxidative stress; requires prior phosphorylation at Ser-706 or/and Ser-710. As to expression, widely expressed.

It localises to the cytoplasm. The protein resides in the cell membrane. The protein localises to the nucleus. Its subcellular location is the golgi apparatus. It is found in the trans-Golgi network. The catalysed reaction is L-seryl-[protein] + ATP = O-phospho-L-seryl-[protein] + ADP + H(+). It carries out the reaction L-threonyl-[protein] + ATP = O-phospho-L-threonyl-[protein] + ADP + H(+). Activated by DAG and phorbol esters. Phorbol-ester/DAG-type domains bind DAG, mediating translocation to membranes. Autophosphorylation of Ser-710 and phosphorylation of Ser-706 by PKC relieves auto-inhibition by the PH domain. Catalytic activity is further increased by phosphorylation at Tyr-717 in response to oxidative stress. Serine/threonine-protein kinase that converts transient diacylglycerol (DAG) signals into prolonged physiological effects downstream of PKC, and is involved in the regulation of cell proliferation via MAPK1/3 (ERK1/2) signaling, oxidative stress-induced NF-kappa-B activation, inhibition of HDAC7 transcriptional repression, signaling downstream of T-cell antigen receptor (TCR) and cytokine production, and plays a role in Golgi membrane trafficking, angiogenesis, secretory granule release and cell adhesion. May potentiate mitogenesis induced by the neuropeptide bombesin by mediating an increase in the duration of MAPK1/3 (ERK1/2) signaling, which leads to accumulation of immediate-early gene products including FOS that stimulate cell cycle progression. In response to oxidative stress, is phosphorylated at Tyr-438 and Tyr-717 by ABL1, which leads to the activation of PRKD2 without increasing its catalytic activity, and mediates activation of NF-kappa-B. In response to the activation of the gastrin receptor CCKBR, is phosphorylated at Ser-244 by CSNK1D and CSNK1E, translocates to the nucleus, phosphorylates HDAC7, leading to nuclear export of HDAC7 and inhibition of HDAC7 transcriptional repression of NR4A1/NUR77. Upon TCR stimulation, is activated independently of ZAP70, translocates from the cytoplasm to the nucleus and is required for interleukin-2 (IL2) promoter up-regulation. During adaptive immune responses, is required in peripheral T-lymphocytes for the production of the effector cytokines IL2 and IFNG after TCR engagement and for optimal induction of antibody responses to antigens. In epithelial cells stimulated with lysophosphatidic acid (LPA), is activated through a PKC-dependent pathway and mediates LPA-stimulated interleukin-8 (IL8) secretion via a NF-kappa-B-dependent pathway. During TCR-induced T-cell activation, interacts with and is activated by the tyrosine kinase LCK, which results in the activation of the NFAT transcription factors. In the trans-Golgi network (TGN), regulates the fission of transport vesicles that are on their way to the plasma membrane and in polarized cells is involved in the transport of proteins from the TGN to the basolateral membrane. Plays an important role in endothelial cell proliferation and migration prior to angiogenesis, partly through modulation of the expression of KDR/VEGFR2 and FGFR1, two key growth factor receptors involved in angiogenesis. In secretory pathway, is required for the release of chromogranin-A (CHGA)-containing secretory granules from the TGN. Downstream of PRKCA, plays important roles in angiotensin-2-induced monocyte adhesion to endothelial cells. Plays a regulatory role in angiogenesis and tumor growth by phosphorylating a downstream mediator CIB1 isoform 2, resulting in vascular endothelial growth factor A (VEGFA) secretion. The polypeptide is Serine/threonine-protein kinase D2 (PRKD2) (Homo sapiens (Human)).